Here is a 527-residue protein sequence, read N- to C-terminus: Transcriptional regulator ATRX (527 aa).

A disordered region spans residues 1 to 527; it reads GRSVVEFGDM…RSYKQKKKRR (527 aa). The span at 14 to 23 shows a compositional bias: polar residues; sequence RQQSAVSSAG. The span at 27–46 shows a compositional bias: basic and acidic residues; it reads PSGKEENVHSPEDKRVTKSK. Positions 47-59 are enriched in basic residues; the sequence is EKSKHLRTRTGRK. Basic and acidic residues predominate over residues 60-84; it reads VKSDVTDRFRKKEQSSESSEGEKKQ. S62 and S74 each carry phosphoserine. The segment covering 85–94 has biased composition (basic residues); it reads GRQRTGTRGK. Basic and acidic residues-rich tracts occupy residues 95–122, 136–145, 152–194, and 204–250; these read KSTDLKEEKVKREREYESSSDGTEKLPE, NKNDTTDEAK, DKSC…EKKQ, and KRPE…KEVK. A Glycyl lysine isopeptide (Lys-Gly) (interchain with G-Cter in SUMO2) cross-link involves residue K105. S112, S113, and S114 each carry phosphoserine. Position 162 is a phosphoserine (S162). Residue R184 is modified to Citrulline. A compositionally biased stretch (basic residues) spans 267 to 297; sequence KQKKQRMSAKKKNSNTKERKRKSLRATTTKR. The segment at 290–427 is interaction with DAXX; sequence LRATTTKRKQ…SNQVNSESDS (138 aa). Phosphoserine occurs at positions 345, 346, and 354. Positions 368 to 382 are enriched in basic and acidic residues; it reads PENRIAKKMLLEEIK. The span at 387–398 shows a compositional bias: acidic residues; it reads SDEDGSSDDEPK. The segment covering 399 to 410 has biased composition (basic and acidic residues); that stretch reads EGEKKRIGKQSE. S423, S425, and S427 each carry phosphoserine. A compositionally biased stretch (basic residues) spans 435 to 446; sequence PRYRHRLLRHKL. A phosphoserine mark is found at S449 and S453. Composition is skewed to basic and acidic residues over residues 454-469 and 509-518; these read GGEKKTKPKEHKETKG and KKAELEENQR.

It belongs to the SNF2/RAD54 helicase family. In terms of assembly, interacts with DAXX to form the chromatin remodeling complex ATRX:DAXX. Probably binds EZH2. Binds annexin V in a calcium and phosphatidylcholine/phosphatidylserine-dependent manner. Interacts directly with CBX5 via the PxVxL motif. Interacts with RAD50, MRE11 and NBN; indicative for an association with the MRN complex. Interacts with histone MACROH2A1. Interacts with histone H3 peptides methylated at 'Lys-10' with preferences H3K9me3 &gt; H3K9me2 &gt; H3K9me1. Interacts with histone H3 peptides unmethylated at 'Lys-5' (H3K4me0). Interacts with MECP2, SMC1 and SMC3. Interacts with SETDB1, TRIM28 and ZNF274. Citrullinated by PADI4.

Its subcellular location is the nucleus. The protein resides in the chromosome. It localises to the telomere. It is found in the PML body. The catalysed reaction is ATP + H2O = ADP + phosphate + H(+). In terms of biological role, involved in transcriptional regulation and chromatin remodeling. Facilitates DNA replication in multiple cellular environments and is required for efficient replication of a subset of genomic loci. Binds to DNA tandem repeat sequences in both telomeres and euchromatin and in vitro binds DNA quadruplex structures. May help stabilizing G-rich regions into regular chromatin structures by remodeling G4 DNA and incorporating H3.3-containing nucleosomes. Catalytic component of the chromatin remodeling complex ATRX:DAXX which has ATP-dependent DNA translocase activity and catalyzes the replication-independent deposition of histone H3.3 in pericentric DNA repeats outside S-phase and telomeres, and the in vitro remodeling of H3.3-containing nucleosomes. Its heterochromatin targeting is proposed to involve a combinatorial readout of histone H3 modifications (specifically methylation states of H3K9 and H3K4) and association with CBX5. Involved in maintaining telomere structural integrity in embryonic stem cells probably implying recruitment of CBX5 to telomeres. May be involved in transcriptional regulation of telomeric repeat-containing RNA (TERRA). Acts as a negative regulator of chromatin incorporation of transcriptionally repressive histone MACROH2A1, particularily at telomeres. Participates in the allele-specific gene expression at the imprinted IGF2/H19 gene locus. On the maternal allele, required for the chromatin occupancy of SMC1 and CTCTF within the H19 imprinting control region (ICR) and involved in esatblishment of histone tails modifications in the ICR. Binds to zinc-finger coding genes with atypical chromatin signatures and regulates its H3K9me3 levels. Forms a complex with ZNF274, TRIM28 and SETDB1 to facilitate the deposition and maintenance of H3K9me3 at the 3' exons of zinc-finger genes. The polypeptide is Transcriptional regulator ATRX (Atrx) (Rattus norvegicus (Rat)).